Here is a 253-residue protein sequence, read N- to C-terminus: 3-deoxy-manno-octulosonate cytidylyltransferase (253 aa).

This sequence belongs to the KdsB family.

Its subcellular location is the cytoplasm. The catalysed reaction is 3-deoxy-alpha-D-manno-oct-2-ulosonate + CTP = CMP-3-deoxy-beta-D-manno-octulosonate + diphosphate. Its pathway is nucleotide-sugar biosynthesis; CMP-3-deoxy-D-manno-octulosonate biosynthesis; CMP-3-deoxy-D-manno-octulosonate from 3-deoxy-D-manno-octulosonate and CTP: step 1/1. The protein operates within bacterial outer membrane biogenesis; lipopolysaccharide biosynthesis. In terms of biological role, activates KDO (a required 8-carbon sugar) for incorporation into bacterial lipopolysaccharide in Gram-negative bacteria. This chain is 3-deoxy-manno-octulosonate cytidylyltransferase, found in Acinetobacter baumannii (strain ATCC 17978 / DSM 105126 / CIP 53.77 / LMG 1025 / NCDC KC755 / 5377).